The chain runs to 299 residues: dTDP-4-dehydrorhamnose reductase (299 aa).

NADH is bound by residues 10–12 (GQV), Asp30, 39–40 (DF), and 63–65 (AHT). 11-12 (QV) contributes to the NADPH binding site. NADPH contacts are provided by residues 39 to 40 (DF), 63 to 65 (AHT), and Tyr102. Position 104-105 (104-105 (TD)) interacts with dTDP-beta-L-rhamnose. Positions 128 and 132 each coordinate NADH. 2 residues coordinate NADPH: Tyr128 and Lys132. The active-site Proton donor/acceptor is Tyr128. Trp153 serves as a coordination point for dTDP-beta-L-rhamnose.

Belongs to the dTDP-4-dehydrorhamnose reductase family. In terms of assembly, homodimer. Requires Mg(2+) as cofactor.

It carries out the reaction dTDP-beta-L-rhamnose + NADP(+) = dTDP-4-dehydro-beta-L-rhamnose + NADPH + H(+). The protein operates within carbohydrate biosynthesis; dTDP-L-rhamnose biosynthesis. Its pathway is bacterial outer membrane biogenesis; LPS O-antigen biosynthesis. Its function is as follows. Involved in the biosynthesis of the dTDP-L-rhamnose which is an important component of lipopolysaccharide (LPS). Catalyzes the reduction of dTDP-6-deoxy-L-lyxo-4-hexulose to yield dTDP-L-rhamnose. RmlD uses NADH and NADPH nearly equally well. In Shigella flexneri, this protein is dTDP-4-dehydrorhamnose reductase.